The chain runs to 153 residues: Endoribonuclease YbeY (153 aa).

The Zn(2+) site is built by histidine 114, histidine 118, and histidine 124.

The protein belongs to the endoribonuclease YbeY family. Zn(2+) serves as cofactor.

It localises to the cytoplasm. Its function is as follows. Single strand-specific metallo-endoribonuclease involved in late-stage 70S ribosome quality control and in maturation of the 3' terminus of the 16S rRNA. The protein is Endoribonuclease YbeY of Nitrosococcus oceani (strain ATCC 19707 / BCRC 17464 / JCM 30415 / NCIMB 11848 / C-107).